We begin with the raw amino-acid sequence, 496 residues long: Sodium/sialic acid symporter SiaT (496 aa).

Residues 1 to 7 lie on the Periplasmic side of the membrane; that stretch reads MQLHDFG. Residues 8–29 traverse the membrane as a helical segment; the sequence is FINYAVLFGYLAAMLLVGVYFS. Over 30–46 the chain is Cytoplasmic; that stretch reads KRQKTADDYFRGGGRVP. A helical transmembrane segment spans residues 47–59; that stretch reads GWAAGVSVFATTL. Na(+) is bound at residue A56. Residue T58 participates in N-acetyl-alpha-neuraminate binding. L59 provides a ligand contact to Na(+). N-acetyl-alpha-neuraminate-binding residues include S60, T63, and Q82. The Periplasmic segment spans residues 60-76; that stretch reads SSITFMSIPAKAYTSDW. A helical transmembrane segment spans residues 77 to 92; that stretch reads TFIIGQYLAIAILPLV. The Cytoplasmic portion of the chain corresponds to 93–116; it reads FYFYIPFFRKLKITSAYEYLEARF. Residues 117 to 144 form a helical membrane-spanning segment; it reads DVRSRLFASLSFMLFHIGRVAIITYLTV. R135 contacts N-acetyl-alpha-neuraminate. The Periplasmic segment spans residues 145-154; the sequence is LALRPFMGID. A helical transmembrane segment spans residues 155-172; sequence PVVLIVLISLLCIIYTWM. The Cytoplasmic portion of the chain corresponds to 173-174; the sequence is GG. A helical transmembrane segment spans residues 175–199; sequence IEGVIWTDVIQGLLLSGGAVLIFIM. Residue D182 participates in Na(+) binding. The Periplasmic segment spans residues 200-235; sequence ICFKVDGGISEIFTTTAQADKFFPTTQWRWSWTDST. A helical transmembrane segment spans residues 236–252; sequence IPVLMIGFLFANIQQFT. Residues 253–272 lie on the Cytoplasmic side of the membrane; the sequence is ASQDVVQRYIVTDSIKETKR. Residues 273–292 traverse the membrane as a helical segment; the sequence is TLITNAKLVAIIPIFFFAIG. Residues 293–325 are Periplasmic-facing; that stretch reads SALFVYYQQNPSLLPAGFNTGGILPLFIVTEMP. A helical membrane pass occupies residues 326 to 356; that stretch reads IGIAGLIIAAIFAAAQSSISSSLNSISSCFN. Residues A339, S342, S343, S345, and S346 each contribute to the Na(+) site. The Cytoplasmic portion of the chain corresponds to 357–374; sequence SDIYTRLSKSSPSPEQKM. Residues 375–396 form a helical membrane-spanning segment; sequence KVAKLVIIVAGIFSSLAAIWLV. Over 397-403 the chain is Periplasmic; sequence LSDEAEI. The helical transmembrane segment at 404-427 threads the bilayer; that stretch reads WDAFNSLIGLMGGPMTGLFMLGIF. At 428–432 the chain is on the cytoplasmic side; that stretch reads VKRAN. Residues 433–453 traverse the membrane as a helical segment; it reads AGSAVVGIIVSIIAVLAARYG. Topologically, residues 454 to 457 are periplasmic; the sequence is SDLN. Residues 458–479 form a helical membrane-spanning segment; it reads FFFYGVIGSMSVVIAGTITAPL. The Cytoplasmic portion of the chain corresponds to 480–496; the sequence is FAPAKQLSLDDSETSEN.

Belongs to the sodium:solute symporter (SSF) (TC 2.A.21) family.

It is found in the cell inner membrane. The catalysed reaction is N-acetyl-alpha-neuraminate(out) + 2 Na(+)(out) = N-acetyl-alpha-neuraminate(in) + 2 Na(+)(in). With respect to regulation, both Na(+) sites regulate Neu5Ac transport. The binding energy of the second Na(+) ion may be used to allosterically stabilize the substrate without directly coordinating it. In the absence of external Na(+), the rate is reduced by 78%. Symporter that uses the Na(+) gradient as the driving force for the uptake of the sialic acid N-acetylneuraminic acid (Neu5Ac). It allows the use of host-derived Neu5Ac as an energy source by P.mirabilis. Also binds N-glycolylneuraminic acid (Neu5Gc) and ketodeoxynonulosonic acid (KDN). Shows the highest affinity for Neu5Ac and Neu5Gc, which commonly occupy the terminal non-reducing position of mammalian cell surface glycoconjugates. The protein is Sodium/sialic acid symporter SiaT of Proteus mirabilis (strain HI4320).